Reading from the N-terminus, the 189-residue chain is HGPRTase-like protein (189 aa).

This sequence belongs to the purine/pyrimidine phosphoribosyltransferase family. Archaeal HPRT subfamily.

Functionally, may catalyze a purine salvage reaction, the substrate is unknown. The protein is HGPRTase-like protein of Natronomonas pharaonis (strain ATCC 35678 / DSM 2160 / CIP 103997 / JCM 8858 / NBRC 14720 / NCIMB 2260 / Gabara) (Halobacterium pharaonis).